We begin with the raw amino-acid sequence, 940 residues long: MSDHTNPPSAPPDDDPNGGSLLMPVTLEEEMSRSYLDYAMSVIVSRALPDARDGLKPVHRRILYGMQESGYTADKPYRKSARINGDVMGKYHPHGDAAIYDALVRLAQPFSLRVPLIDGQGNFGSMDGDPAAAPRYTEARLARSASFLLNDIDRDTVDFQPNYDDSEMEPRVLPASYPNLLVNGADGIAVGMATKIPTHNPTEVIDATLAMIDNPDITLDELMTVIPGPDFPTGGLILGRSGIRSAFETGKGSITVRARTDFEEVRGGRQAIVISEIPYQVNKATLQERMAELVRAKQIEGISDIRDESDRSGVRVVIELKRDATPDVVLNHLFRFTQLQISYGINMLALDGGQPRLMGLRDVLSTFIRFREDVILRRARFELNKARDRAHLLVGLAIAVANIDEVIRLIRQSPDSTSARIALMERDWPAADVAPLLTLIDDGGNVLTEAQTVRLTEVQARGILELRLQRLTGLERDKIHNEMQEVAARIGELLEIIGSHIRRMEVMREELAVIRAELNSPRRSEINDSLADQDDESLIEPGQMVVTITRDGFIKRTPLDVFRQQHRGGRGRAAASMRGDDIVTRSFNAHTHQWVLFFSSGGKAYRQKVWRLPEAGPTAKGRALVNLLPELGSDGITAVLPLPQDESLWEGLHLVFATASGGIRRNRLSDFKNVRASGLIAMKLDEGDRLIGVATCREGDDIMLASRLGRCIRFQANEDTLRVFAGRESSGVRGMKLAQGDEVISLSVLRHVEATPEERAAYLRYASARRRSAAGEEDQIDAEVMEADDSEVTVDDTALSPERIAGLEEAEEFLLTVTIAGFGKRSSAYDYRVSGRGGQGIANINLAPRNGRAVAATFPVRPGDDVMLVTDAGRLIRVPADQVRITGRSTMGVTLFRVDKDEVVTSVFPVLETESVDDNGDDADSVAPAAPDGQVTDSDD.

Positions 1–22 (MSDHTNPPSAPPDDDPNGGSLL) are disordered. The 491-residue stretch at 48 to 538 (LPDARDGLKP…SLADQDDESL (491 aa)) folds into the Topo IIA-type catalytic domain. The O-(5'-phospho-DNA)-tyrosine intermediate role is filled by Y136. The GyrA-box signature appears at 565 to 571 (QHRGGRG). The span at 914 to 924 (ESVDDNGDDAD) shows a compositional bias: acidic residues. Positions 914 to 940 (ESVDDNGDDADSVAPAAPDGQVTDSDD) are disordered.

It belongs to the type II topoisomerase GyrA/ParC subunit family. In terms of assembly, heterotetramer, composed of two GyrA and two GyrB chains. In the heterotetramer, GyrA contains the active site tyrosine that forms a transient covalent intermediate with DNA, while GyrB binds cofactors and catalyzes ATP hydrolysis.

Its subcellular location is the cytoplasm. The enzyme catalyses ATP-dependent breakage, passage and rejoining of double-stranded DNA.. In terms of biological role, a type II topoisomerase that negatively supercoils closed circular double-stranded (ds) DNA in an ATP-dependent manner to modulate DNA topology and maintain chromosomes in an underwound state. Negative supercoiling favors strand separation, and DNA replication, transcription, recombination and repair, all of which involve strand separation. Also able to catalyze the interconversion of other topological isomers of dsDNA rings, including catenanes and knotted rings. Type II topoisomerases break and join 2 DNA strands simultaneously in an ATP-dependent manner. The sequence is that of DNA gyrase subunit A from Granulibacter bethesdensis (strain ATCC BAA-1260 / CGDNIH1).